The following is a 317-amino-acid chain: Acetyl-coenzyme A carboxylase carboxyl transferase subunit alpha (317 aa).

One can recognise a CoA carboxyltransferase C-terminal domain in the interval L40–E293.

This sequence belongs to the AccA family. In terms of assembly, acetyl-CoA carboxylase is a heterohexamer composed of biotin carboxyl carrier protein (AccB), biotin carboxylase (AccC) and two subunits each of ACCase subunit alpha (AccA) and ACCase subunit beta (AccD).

The protein resides in the cytoplasm. It catalyses the reaction N(6)-carboxybiotinyl-L-lysyl-[protein] + acetyl-CoA = N(6)-biotinyl-L-lysyl-[protein] + malonyl-CoA. The protein operates within lipid metabolism; malonyl-CoA biosynthesis; malonyl-CoA from acetyl-CoA: step 1/1. Functionally, component of the acetyl coenzyme A carboxylase (ACC) complex. First, biotin carboxylase catalyzes the carboxylation of biotin on its carrier protein (BCCP) and then the CO(2) group is transferred by the carboxyltransferase to acetyl-CoA to form malonyl-CoA. This Sinorhizobium medicae (strain WSM419) (Ensifer medicae) protein is Acetyl-coenzyme A carboxylase carboxyl transferase subunit alpha.